The primary structure comprises 538 residues: Cytochrome P450 monooxygenase cfoH (538 aa).

The chain crosses the membrane as a helical span at residues 24 to 44; it reads VLTFFAILLVAILLWYMIPYF. C471 serves as a coordination point for heme.

Belongs to the cytochrome P450 family. It depends on heme as a cofactor.

The protein resides in the membrane. The protein operates within secondary metabolite biosynthesis; flavonoid biosynthesis. In terms of biological role, cytochrome P450 monooxygenase; part of the gene cluster that mediates the biosynthesis of chlorflavonin, a fungal flavonoid with acetolactate synthase inhibitory activity. Within the pathway, cfoH is responsible for the hydroxylation of the flavonoid skeleton at position C2'. The pathway begins with the PKS-NRPS hybrid synthetase cfoA that uses benzoic acid or p-hydroxybenzoic acid as a starter unit with four rounds of chain elongation using malonyl-CoA to form the chalcone skeleton. Then, a new type of chalcone isomerase, cfoK, catalyzes the conversion of the chalcone into a flavanone by a histidine-mediated oxa-Michael addition mechanism. The desaturation of flavanone to flavone is catalyzed by a new type of flavone synthase, the flavin mononucleotide (FMN)-dependent oxidoreductase cfoJ. Monooxygenases cfoF, cfoG, and P450 cfoH are responsible for the hydroxylation of the flavonoid skeleton at sites C3, C8, and C2', respectively. Like cfoF, the dehydratase cfoI plays also a role in the hydroxylation of position C3. Methyltransferases cfoB, cfoC, and cfoD then catalyze the methylation of C7-OH, C8-OH, and C3-OH, respectively. Finally, the monooxygenase cfoE is responsible for the chlorination of flavonoid at position C3'. This Aspergillus candidus protein is Cytochrome P450 monooxygenase cfoH.